The chain runs to 190 residues: Xanthine phosphoribosyltransferase (190 aa).

Leu20 and Asn27 together coordinate xanthine. Position 129 to 133 (129 to 133 (ANGRA)) interacts with 5-phospho-alpha-D-ribose 1-diphosphate. Lys157 lines the xanthine pocket.

It belongs to the purine/pyrimidine phosphoribosyltransferase family. Xpt subfamily. As to quaternary structure, homodimer.

The protein localises to the cytoplasm. It catalyses the reaction XMP + diphosphate = xanthine + 5-phospho-alpha-D-ribose 1-diphosphate. The protein operates within purine metabolism; XMP biosynthesis via salvage pathway; XMP from xanthine: step 1/1. Its function is as follows. Converts the preformed base xanthine, a product of nucleic acid breakdown, to xanthosine 5'-monophosphate (XMP), so it can be reused for RNA or DNA synthesis. The sequence is that of Xanthine phosphoribosyltransferase from Clostridioides difficile (strain 630) (Peptoclostridium difficile).